A 197-amino-acid chain; its full sequence is Probable NADPH:quinone oxidoreductase 1 (197 aa).

Belongs to the SsuE family. As to quaternary structure, homotetramer. Requires FMN as cofactor.

It carries out the reaction a quinone + NADH + H(+) = a quinol + NAD(+). The enzyme catalyses a quinone + NADPH + H(+) = a quinol + NADP(+). Its function is as follows. The enzyme apparently serves as a quinone reductase in connection with conjugation reactions of hydroquinones involved in detoxification pathways. The sequence is that of Probable NADPH:quinone oxidoreductase 1 from Oryza sativa subsp. japonica (Rice).